The primary structure comprises 694 residues: DNA primase (694 aa).

Residues 41–65 (CPFHDDKSPSFTVSPAKQFYYCFSC) form a CHC2-type zinc finger. The Toprim domain maps to 265–348 (DQAVVVEGYF…QGQVQLRVLN (84 aa)). Mg(2+) is bound by residues Glu-271, Asp-317, and Asp-319.

It belongs to the DnaG primase family. In terms of assembly, monomer. Interacts with DnaB. The cofactor is Zn(2+). Requires Mg(2+) as cofactor.

The enzyme catalyses ssDNA + n NTP = ssDNA/pppN(pN)n-1 hybrid + (n-1) diphosphate.. Functionally, RNA polymerase that catalyzes the synthesis of short RNA molecules used as primers for DNA polymerase during DNA replication. In Synechococcus elongatus (strain ATCC 33912 / PCC 7942 / FACHB-805) (Anacystis nidulans R2), this protein is DNA primase.